Reading from the N-terminus, the 223-residue chain is Phage shock protein A homolog (223 aa).

Residues Ile29–Met185 adopt a coiled-coil conformation.

The protein belongs to the PspA/Vipp/IM30 family.

The protein is Phage shock protein A homolog of Deinococcus radiodurans (strain ATCC 13939 / DSM 20539 / JCM 16871 / CCUG 27074 / LMG 4051 / NBRC 15346 / NCIMB 9279 / VKM B-1422 / R1).